The following is a 277-amino-acid chain: NH(3)-dependent NAD(+) synthetase (277 aa).

An ATP-binding site is contributed by 36–43 (GLSGGIDS). D42 is a binding site for Mg(2+). R118 lines the deamido-NAD(+) pocket. Residue T138 coordinates ATP. Position 143 (E143) interacts with Mg(2+). ATP-binding residues include K167 and S189.

This sequence belongs to the NAD synthetase family. As to quaternary structure, homodimer.

It carries out the reaction deamido-NAD(+) + NH4(+) + ATP = AMP + diphosphate + NAD(+) + H(+). Its pathway is cofactor biosynthesis; NAD(+) biosynthesis; NAD(+) from deamido-NAD(+) (ammonia route): step 1/1. In terms of biological role, catalyzes the ATP-dependent amidation of deamido-NAD to form NAD. Uses ammonia as a nitrogen source. This is NH(3)-dependent NAD(+) synthetase from Chlorobium phaeobacteroides (strain BS1).